The primary structure comprises 790 residues: Threonine--tRNA ligase 2, cytoplasmic (790 aa).

Ala2 carries the post-translational modification N-acetylalanine. A coiled-coil region spans residues 13–68 (SRLQRQEEDIRWLCAEVQRLRDEQLRGPERGQAEGPRLTREVAQLQAENRDLHQRL). Residues 80–117 (RTEAGRAAAHEPPTQNQEKDTKKKRLKQSEPGREVKQP) form a disordered region. Residues 96–117 (QEKDTKKKRLKQSEPGREVKQP) show a composition bias toward basic and acidic residues. The TGS domain occupies 148–210 (NVISVRVAGG…EGDSTVELLM (63 aa)). At Ser441 the chain carries Phosphoserine. Residues 774-780 (KLKNLKK) carry the Nuclear localization signal motif.

This sequence belongs to the class-II aminoacyl-tRNA synthetase family. May be a component of the multisynthetase complex (MSC), a large multi-subunit complex which contains at least eight different aminoacyl-tRNA synthetases plus three auxillary subunits AIMP1, AIMP2 and EEF1E1. Interacts with the MSC components EPRS1, AIMP1, AIMP2 and KARS1. As to expression, ubiquitous (at protein level). Strongly expressed in muscle (at protein level). Moderately expressed in heart and liver (at protein level). Weakly expressed in stomach, kidney, testis, spleen, brain, fat and lung (at protein level).

The protein localises to the cytoplasm. It is found in the nucleus. The catalysed reaction is tRNA(Thr) + L-threonine + ATP = L-threonyl-tRNA(Thr) + AMP + diphosphate + H(+). Functionally, catalyzes the attachment of threonine to tRNA(Thr) in a two-step reaction: threonine is first activated by ATP to form Thr-AMP and then transferred to the acceptor end of tRNA(Thr). Also edits incorrectly charged tRNA(Thr) via its editing domain, at the post-transfer stage. In Mus musculus (Mouse), this protein is Threonine--tRNA ligase 2, cytoplasmic (Tars3).